The following is a 212-amino-acid chain: Large ribosomal subunit protein uL3 (212 aa).

The segment at 147 to 166 is disordered; sequence GSTGQNQSPGKVFKGKKMPG. Gln153 bears the N5-methylglutamine mark.

It belongs to the universal ribosomal protein uL3 family. As to quaternary structure, part of the 50S ribosomal subunit. Forms a cluster with proteins L14 and L19. Methylated by PrmB.

One of the primary rRNA binding proteins, it binds directly near the 3'-end of the 23S rRNA, where it nucleates assembly of the 50S subunit. The chain is Large ribosomal subunit protein uL3 from Psychrobacter sp. (strain PRwf-1).